A 128-amino-acid chain; its full sequence is uncharacterized protein (128 aa).

The next 2 helical transmembrane spans lie at 52-72 and 91-111; these read LLVILLLIIGFLSCLLGGIFL and LFVAFFVVGSLLLLVAVVMLI.

The protein localises to the cell membrane. This is an uncharacterized protein from Mycoplasma pneumoniae (strain ATCC 29342 / M129 / Subtype 1) (Mycoplasmoides pneumoniae).